The primary structure comprises 81 residues: uncharacterized protein (81 aa).

A signal peptide spans 1-16 (MNRLTFYGLCLSGAVG). The interval 55 to 81 (TIDPHHNHHDDHHDSHGHGHGKIKGHH) is disordered. Residues 57–71 (DPHHNHHDDHHDSHG) are compositionally biased toward basic and acidic residues. Basic residues predominate over residues 72-81 (HGHGKIKGHH).

It localises to the secreted. This is an uncharacterized protein from Dictyostelium discoideum (Social amoeba).